Here is an 892-residue protein sequence, read N- to C-terminus: Protein translocase subunit SecA (892 aa).

Residues Q89, 107 to 111 (GEGKT), and D517 each bind ATP. Zn(2+)-binding residues include C879, C881, C890, and H891.

This sequence belongs to the SecA family. In terms of assembly, monomer and homodimer. Part of the essential Sec protein translocation apparatus which comprises SecA, SecYEG and auxiliary proteins SecDF-YajC and YidC. The cofactor is Zn(2+).

The protein localises to the cell inner membrane. Its subcellular location is the cytoplasm. The enzyme catalyses ATP + H2O + cellular proteinSide 1 = ADP + phosphate + cellular proteinSide 2.. Functionally, part of the Sec protein translocase complex. Interacts with the SecYEG preprotein conducting channel. Has a central role in coupling the hydrolysis of ATP to the transfer of proteins into and across the cell membrane, serving as an ATP-driven molecular motor driving the stepwise translocation of polypeptide chains across the membrane. This is Protein translocase subunit SecA from Ruthia magnifica subsp. Calyptogena magnifica.